Consider the following 492-residue polypeptide: Beclin 1-associated autophagy-related key regulator (492 aa).

S29 bears the Phosphoserine mark. Positions 43–58 are cysteine repeats; the sequence is CPLCNTTRRRLTCAKC. A coiled-coil region spans residues 71–180; it reads DRERFIDKKE…KLGDLVEKKT (110 aa). Residues 410 to 473 are disordered; that stretch reads PGVAGESDES…PIASSSAGGM (64 aa). Positions 413-492 are BATS; that stretch reads AGESDESGDE…SWFKAYTGHR (80 aa). Residues 415-433 are compositionally biased toward acidic residues; sequence ESDESGDERVSDEETDLGT. At S416 the chain carries Phosphoserine. T429 bears the Phosphothreonine mark. The span at 448 to 473 shows a compositional bias: low complexity; sequence SQSVEVSQSQSTQASPPIASSSAGGM.

This sequence belongs to the ATG14 family. Forms homooligomers; homo-oligomerization is essential for the roles in membrane tethering and enhancement of SNARE-mediated fusion. Component of the PI3K (PI3KC3/PI3K-III/class III phosphatidylinositol 3-kinase) complex I (PI3KC3-C1) in which the core composed of the catalytic subunit PIK3C3, the regulatory subunit PIK3R4 and BECN1 is associated with ATG14. PI3KC3-C1 displays a V-shaped architecture with PIK3R4 serving as a bridge between PIK3C3 and the ATG14:BECN1 subcomplex. PI3KC3-C1 can associate with further regulatory subunits. Interacts with PIK3CB. Interacts (via coiled-coil domain) with BECN2 (via coiled-coil domain); this interaction is tighter than BECN2 self-association. Interacts with the STX17-SNAP29 binary t-SNARE complex. Interacts with NRBF2. Interacts with PIK3C3 and BECN1; this interaction is increased in the absence of TMEM39A. Interacts with STEEP1; the interaction is required for trafficking of STING1 from the endoplasmic reticulum. Interacts with ARMC3 (via ARM domains). In terms of processing, ubiquitinated via 'Lys-6', 'Lys-11' and 'Lys-63'-linked polyubiquitin chains on multiple lysines by MARCHF7, leading to ATG14 aggregation and loss of interaction with STX17.

It is found in the cytoplasm. It localises to the endoplasmic reticulum membrane. Its subcellular location is the preautophagosomal structure membrane. The protein resides in the cytoplasmic vesicle. The protein localises to the autophagosome membrane. Functionally, required for both basal and inducible autophagy. Determines the localization of the autophagy-specific PI3-kinase complex PI3KC3-C1. Plays a role in autophagosome formation and MAP1LC3/LC3 conjugation to phosphatidylethanolamine. Promotes BECN1 translocation from the trans-Golgi network to autophagosomes. Enhances PIK3C3 activity in a BECN1-dependent manner. Essential for the autophagy-dependent phosphorylation of BECN1. Stimulates the phosphorylation of BECN1, but suppresses the phosphorylation PIK3C3 by AMPK. Binds to STX17-SNAP29 binary t-SNARE complex on autophagosomes and primes it for VAMP8 interaction to promote autophagosome-endolysosome fusion. Modulates the hepatic lipid metabolism. This Homo sapiens (Human) protein is Beclin 1-associated autophagy-related key regulator.